The following is a 445-amino-acid chain: Phosphoglucosamine mutase (445 aa).

Ser-102 functions as the Phosphoserine intermediate in the catalytic mechanism. Residues Ser-102, Asp-241, Asp-243, and Asp-245 each coordinate Mg(2+). At Ser-102 the chain carries Phosphoserine.

It belongs to the phosphohexose mutase family. The cofactor is Mg(2+). In terms of processing, activated by phosphorylation.

The enzyme catalyses alpha-D-glucosamine 1-phosphate = D-glucosamine 6-phosphate. Its function is as follows. Catalyzes the conversion of glucosamine-6-phosphate to glucosamine-1-phosphate. This chain is Phosphoglucosamine mutase, found in Acinetobacter baumannii (strain AB0057).